The chain runs to 220 residues: Ribose-5-phosphate isomerase A (220 aa).

Substrate contacts are provided by residues 28–31, 81–84, and 94–97; these read TGST, DGAD, and KGGG. The active-site Proton acceptor is Glu103. Lys121 is a substrate binding site.

The protein belongs to the ribose 5-phosphate isomerase family. Homodimer.

It carries out the reaction aldehydo-D-ribose 5-phosphate = D-ribulose 5-phosphate. It functions in the pathway carbohydrate degradation; pentose phosphate pathway; D-ribose 5-phosphate from D-ribulose 5-phosphate (non-oxidative stage): step 1/1. Catalyzes the reversible conversion of ribose-5-phosphate to ribulose 5-phosphate. The polypeptide is Ribose-5-phosphate isomerase A (Yersinia enterocolitica serotype O:8 / biotype 1B (strain NCTC 13174 / 8081)).